The chain runs to 235 residues: RNA pyrophosphohydrolase (235 aa).

Residues 6-149 (GFRPNVGIIL…KREVYQLALS (144 aa)) form the Nudix hydrolase domain. A Nudix box motif is present at residues 38 to 59 (GGIKYGETPEQAMFRELHEEVG). Residues 161–235 (APLSPYGRGG…PDDTAPKDNS (75 aa)) are disordered. A compositionally biased stretch (basic and acidic residues) spans 171–196 (QHRERDGRDARDSRERSSDQGGRNEQ). Low complexity predominate over residues 203–220 (TVTTTTVIVETVSVSAPT).

It belongs to the Nudix hydrolase family. RppH subfamily. A divalent metal cation serves as cofactor.

Functionally, accelerates the degradation of transcripts by removing pyrophosphate from the 5'-end of triphosphorylated RNA, leading to a more labile monophosphorylated state that can stimulate subsequent ribonuclease cleavage. The polypeptide is RNA pyrophosphohydrolase (Ralstonia pickettii (strain 12J)).